A 479-amino-acid polypeptide reads, in one-letter code: MAATTTTSSSSRIAYSRHNIPGLHSDSLNPKSISFSSNLHTFSLKSSGSRRQLYSRRTGAVVIMQSMDKVEVDISLSPRVNSVKPSKTVAITDQATALVQAGVPVIRLAAGEPDFDTPAPIVEAGINAIREGHTRYTPNAGTMELRSAISHKLKEENGLSYTPDQILVSNGAKQSIIQAVLAVCSPGDEVLIPAPYWVSYPEMARLADATPVILPTSISEDFLLDPKLLESKLTEKSRLLILCSPSNPTGSVYPRKLLEQIAEIVARHPRLLVISDEIYEHIIYAPATHTSFASLPGMWDRTLTVNGFSKAFAMTGWRLGYIAGPKHFIAACNKIQSQFTSGASSISQKAAVAALGLGYAGGELVATMVKSFRERRDYLVKSFGEIEGVKISEPRGAFYLFIDLSSYYGVEVDGFGSINNSESLCRYLLDKAQVALVPGDAFGDDTCIRISYAASLSTLQAAVERIKKALVTIKPPVPV.

The N-terminal 79 residues, 1 to 79, are a transit peptide targeting the chloroplast; that stretch reads MAATTTTSSS…VEVDISLSPR (79 aa). Gly111 is an L-aspartate binding site. Pyridoxal 5'-phosphate is bound at residue 172–173; sequence AK. L-aspartate is bound by residues Trp197 and Asn247. Residues Asn247, Tyr279, and 307–309 each bind pyridoxal 5'-phosphate; that span reads GFS. Lys310 bears the N6-(pyridoxal phosphate)lysine mark. Residue Arg318 participates in pyridoxal 5'-phosphate binding. Residue Arg449 coordinates L-aspartate.

The protein belongs to the class-I pyridoxal-phosphate-dependent aminotransferase family. In terms of assembly, homodimer. Pyridoxal 5'-phosphate serves as cofactor. Expressed in flowers, pistils, stamens, ovaries and at lower levels in leaves and sepals.

The protein localises to the plastid. It localises to the chloroplast. The enzyme catalyses L-aspartate + 2-oxoglutarate = oxaloacetate + L-glutamate. It catalyses the reaction L-arogenate + oxaloacetate = prephenate + L-aspartate. It carries out the reaction L-arogenate + 2-oxoglutarate = prephenate + L-glutamate. Its pathway is amino-acid biosynthesis; L-phenylalanine biosynthesis; L-arogenate from prephenate (L-Asp route): step 1/1. It participates in amino-acid biosynthesis; L-phenylalanine biosynthesis; L-arogenate from prephenate (L-Glu route): step 1/1. Prokaryotic-type aspartate aminotransferase. Also has a prenate transaminase activity. Involved in the aromatic amino acids biosynthesis pathway via the arogenate route. Required for the transamination of prephenate into arogenate. Can use 2-oxoglutarate, oxaloacetate and prephenate as substrates, but not phenylpyruvate or 4-hydroxyphenylpyruvate. This is Bifunctional aspartate aminotransferase and glutamate/aspartate-prephenate aminotransferase from Petunia hybrida (Petunia).